The following is a 1371-amino-acid chain: Pleckstrin homology-like domain family B member 1 (1371 aa).

Phosphoserine is present on Ser-51. Residues 64–125 (TVIGSAARDI…LTQGCMLCLG (62 aa)) enclose the FHA domain. Arg-131 carries the post-translational modification Asymmetric dimethylarginine. The interval 153–182 (GPTYNPGSAESESLVNGNHTAQPATRAPSA) is disordered. The span at 157–175 (NPGSAESESLVNGNHTAQP) shows a compositional bias: polar residues. Phosphoserine occurs at positions 192, 220, and 223. Disordered stretches follow at residues 211–336 (AAGK…TDSP) and 368–573 (PSSG…RVPI). Composition is skewed to low complexity over residues 252–273 (SPAFSPLSSPASSGSCASHSPS) and 296–312 (LQPPQSRPSGSRSSDSP). Phosphoserine is present on residues Ser-325 and Ser-335. Residues 368-377 (PSSGARSQPA) are compositionally biased toward polar residues. 8 positions are modified to phosphoserine: Ser-382, Ser-405, Ser-431, Ser-445, Ser-463, Ser-472, Ser-491, and Ser-503. A compositionally biased stretch (low complexity) spans 464-477 (PSLSRRALSPLPAR). The segment covering 483–493 (KLSREVAESPR) has biased composition (basic and acidic residues). At Arg-514 the chain carries Omega-N-methylarginine. A phosphoserine mark is found at Ser-520 and Ser-522. At Thr-524 the chain carries Phosphothreonine. Phosphoserine is present on residues Ser-535, Ser-541, Ser-553, Ser-557, Ser-565, Ser-580, Ser-585, and Ser-683. Polar residues predominate over residues 547-559 (GSLTGASPRQSPR). Disordered stretches follow at residues 672-714 (ESGG…GAKH) and 942-1020 (GLAA…QNGT). Basic and acidic residues-rich tracts occupy residues 682-696 (ESMERSDEENLKEEC) and 703-714 (QQEHEDAPGAKH). A coiled-coil region spans residues 688-798 (DEENLKEECS…ETGIQKDRDK (111 aa)). Phosphoserine is present on residues Ser-976 and Ser-1022. A compositionally biased stretch (low complexity) spans 976–997 (SPLPRTRSGPLPSSSGSSSSSS). The interval 1124–1143 (SMETSISTGGNSACSPDNMS) is disordered. A coiled-coil region spans residues 1150-1216 (MGKIEEMEKM…QQLVEKEVKL (67 aa)). The PH domain maps to 1261 to 1364 (SKVCRGYLIK…WMDVIVTGAE (104 aa)).

This is Pleckstrin homology-like domain family B member 1 (Phldb1) from Mus musculus (Mouse).